Consider the following 43-residue polypeptide: Protein PsbN (43 aa).

A helical membrane pass occupies residues 4–24 (ATIIVIFVSSLLVGITAYSVY).

This sequence belongs to the PsbN family.

The protein localises to the plastid. Its subcellular location is the chloroplast thylakoid membrane. Its function is as follows. May play a role in photosystem I and II biogenesis. The polypeptide is Protein PsbN (Thalassiosira pseudonana (Marine diatom)).